The following is a 75-amino-acid chain: Large ribosomal subunit protein bL31 (75 aa).

The protein belongs to the bacterial ribosomal protein bL31 family. Type A subfamily. As to quaternary structure, part of the 50S ribosomal subunit.

Binds the 23S rRNA. The sequence is that of Large ribosomal subunit protein bL31 from Chlorobium limicola (strain DSM 245 / NBRC 103803 / 6330).